The sequence spans 402 residues: NADH-quinone oxidoreductase subunit D (402 aa).

The protein belongs to the complex I 49 kDa subunit family. As to quaternary structure, NDH-1 is composed of 14 different subunits. Subunits NuoB, C, D, E, F, and G constitute the peripheral sector of the complex.

It is found in the cell inner membrane. It catalyses the reaction a quinone + NADH + 5 H(+)(in) = a quinol + NAD(+) + 4 H(+)(out). Its function is as follows. NDH-1 shuttles electrons from NADH, via FMN and iron-sulfur (Fe-S) centers, to quinones in the respiratory chain. The immediate electron acceptor for the enzyme in this species is believed to be ubiquinone. Couples the redox reaction to proton translocation (for every two electrons transferred, four hydrogen ions are translocated across the cytoplasmic membrane), and thus conserves the redox energy in a proton gradient. This chain is NADH-quinone oxidoreductase subunit D, found in Xanthobacter autotrophicus (strain ATCC BAA-1158 / Py2).